A 175-amino-acid polypeptide reads, in one-letter code: Protein GrpE (175 aa).

It belongs to the GrpE family. Homodimer.

The protein resides in the cytoplasm. Functionally, participates actively in the response to hyperosmotic and heat shock by preventing the aggregation of stress-denatured proteins, in association with DnaK and GrpE. It is the nucleotide exchange factor for DnaK and may function as a thermosensor. Unfolded proteins bind initially to DnaJ; upon interaction with the DnaJ-bound protein, DnaK hydrolyzes its bound ATP, resulting in the formation of a stable complex. GrpE releases ADP from DnaK; ATP binding to DnaK triggers the release of the substrate protein, thus completing the reaction cycle. Several rounds of ATP-dependent interactions between DnaJ, DnaK and GrpE are required for fully efficient folding. The chain is Protein GrpE from Thermoplasma acidophilum (strain ATCC 25905 / DSM 1728 / JCM 9062 / NBRC 15155 / AMRC-C165).